A 229-amino-acid polypeptide reads, in one-letter code: Probable ribonuclease H (229 aa).

Residues 42–164 (LQDISLEFDK…ADFLANSAAK (123 aa)) enclose the RNase H type-1 domain. A divalent metal cation contacts are provided by E60, D87, and D156.

It belongs to the RNase H family. A divalent metal cation serves as cofactor.

The catalysed reaction is Endonucleolytic cleavage to 5'-phosphomonoester.. Its function is as follows. Endonuclease that specifically degrades the RNA of RNA-DNA hybrids. This chain is Probable ribonuclease H (RNH1), found in Acanthamoeba polyphaga mimivirus (APMV).